The sequence spans 415 residues: Esterase FrsA (415 aa).

The disordered stretch occupies residues 1–23 (MANRNLSESLFKPRQKHQETSTL).

The protein belongs to the FrsA family.

It catalyses the reaction a carboxylic ester + H2O = an alcohol + a carboxylate + H(+). Functionally, catalyzes the hydrolysis of esters. This Photorhabdus laumondii subsp. laumondii (strain DSM 15139 / CIP 105565 / TT01) (Photorhabdus luminescens subsp. laumondii) protein is Esterase FrsA.